Reading from the N-terminus, the 224-residue chain is Flagellar L-ring protein (224 aa).

The signal sequence occupies residues 1 to 15; sequence MIKYIALASVVLLVG. Cys-16 carries N-palmitoyl cysteine lipidation. Cys-16 carries S-diacylglycerol cysteine lipidation.

This sequence belongs to the FlgH family. In terms of assembly, the basal body constitutes a major portion of the flagellar organelle and consists of four rings (L,P,S, and M) mounted on a central rod.

The protein resides in the cell outer membrane. The protein localises to the bacterial flagellum basal body. Its function is as follows. Assembles around the rod to form the L-ring and probably protects the motor/basal body from shearing forces during rotation. In Shewanella frigidimarina (strain NCIMB 400), this protein is Flagellar L-ring protein.